Consider the following 755-residue polypeptide: Actin-related protein 5 (755 aa).

Residue S7 is modified to Phosphoserine. K12 is covalently cross-linked (Glycyl lysine isopeptide (Lys-Gly) (interchain with G-Cter in ubiquitin)). T24 carries the post-translational modification Phosphothreonine. The residue at position 383 (S383) is a Phosphoserine. A disordered region spans residues 418-444; that stretch reads QRFLKASQDARQKAKEEKERVAKEEEE. Residues 425 to 444 show a composition bias toward basic and acidic residues; the sequence is QDARQKAKEEKERVAKEEEE.

Belongs to the actin family. In terms of assembly, component of the chromatin-remodeling INO80 complex, at least composed of ARP4, ARP5, ARP8, RVB1, RVB2, TAF14, NHP10, IES1, IES3, IES4, IES6, ACT1, IES2, IES5 and INO80.

It is found in the nucleus. In terms of biological role, probably involved in transcription regulation via its interaction with the INO80 complex, a chromatin remodeling complex. The protein is Actin-related protein 5 (ARP5) of Saccharomyces cerevisiae (strain ATCC 204508 / S288c) (Baker's yeast).